Reading from the N-terminus, the 609-residue chain is Wee1-like protein kinase (609 aa).

Positions 1-10 (MAFRQSEHEM) are enriched in basic and acidic residues. Disordered regions lie at residues 1–88 (MAFR…SMSP) and 147–166 (PLHNRKLPTQDTANVNPFTP). A phosphoserine mark is found at Ser-23, Ser-25, and Ser-27. The segment covering 37-48 (RFADDDFDKDTP) has biased composition (basic and acidic residues). Phosphothreonine is present on Thr-47. Phosphoserine is present on Ser-52. Positions 153 to 165 (LPTQDTANVNPFT) are enriched in polar residues. Phosphothreonine is present on Thr-165. Ser-168 is modified (phosphoserine). Residues 239 to 517 (FMQVNVIGVG…SQSIFSHPIL (279 aa)) enclose the Protein kinase domain. ATP-binding positions include 245–253 (IGVGEFGVV) and Lys-268. Asp-361 functions as the Proton acceptor in the catalytic mechanism. 2 residues coordinate Mg(2+): Asn-366 and Asp-412.

It belongs to the protein kinase superfamily. Ser/Thr protein kinase family. WEE1 subfamily. Mg(2+) serves as cofactor. In terms of processing, phosphorylated during M and G1 phases. Expressed in embryos; expression remains high in the proliferating cells of the central nervous system well after cells in the rest of the embryo have ceased dividing.

The protein localises to the nucleus. The catalysed reaction is L-tyrosyl-[protein] + ATP = O-phospho-L-tyrosyl-[protein] + ADP + H(+). Its activity is regulated as follows. Negatively regulated by phosphorylation in the M-phase. Functionally, acts as a negative regulator of entry into mitosis (G2 to M transition). This kinase specifically phosphorylates and inactivates cyclin B1-complexed CDC2. The polypeptide is Wee1-like protein kinase (Drosophila melanogaster (Fruit fly)).